The sequence spans 150 residues: Large ribosomal subunit protein bL9 (150 aa).

The protein belongs to the bacterial ribosomal protein bL9 family.

Its function is as follows. Binds to the 23S rRNA. This Limosilactobacillus fermentum (strain NBRC 3956 / LMG 18251) (Lactobacillus fermentum) protein is Large ribosomal subunit protein bL9.